The following is a 401-amino-acid chain: 8-amino-7-oxononanoate synthase (401 aa).

Substrate is bound at residue R24. Position 111 to 112 (111 to 112 (GF)) interacts with pyridoxal 5'-phosphate. Residue H137 coordinates substrate. Pyridoxal 5'-phosphate-binding residues include S183, H211, and T240. The residue at position 243 (K243) is an N6-(pyridoxal phosphate)lysine. T357 contacts substrate.

This sequence belongs to the class-II pyridoxal-phosphate-dependent aminotransferase family. BioF subfamily. As to quaternary structure, homodimer. The cofactor is pyridoxal 5'-phosphate.

The catalysed reaction is 6-carboxyhexanoyl-[ACP] + L-alanine + H(+) = (8S)-8-amino-7-oxononanoate + holo-[ACP] + CO2. It participates in cofactor biosynthesis; biotin biosynthesis. Catalyzes the decarboxylative condensation of pimeloyl-[acyl-carrier protein] and L-alanine to produce 8-amino-7-oxononanoate (AON), [acyl-carrier protein], and carbon dioxide. The chain is 8-amino-7-oxononanoate synthase from Xanthomonas oryzae pv. oryzae (strain MAFF 311018).